The chain runs to 22 residues: Peptide PGLa-BM3 (22 aa).

Leucine amide is present on L22.

As to expression, expressed by the skin glands.

It is found in the secreted. Antimicrobial peptide. The protein is Peptide PGLa-BM3 of Xenopus boumbaensis (Mawa clawed frog).